A 481-amino-acid chain; its full sequence is Glutamyl-tRNA(Gln) amidotransferase subunit A (481 aa).

Active-site charge relay system residues include Lys-74 and Ser-149. The Acyl-ester intermediate role is filled by Ser-173.

It belongs to the amidase family. GatA subfamily. In terms of assembly, heterotrimer of A, B and C subunits.

The enzyme catalyses L-glutamyl-tRNA(Gln) + L-glutamine + ATP + H2O = L-glutaminyl-tRNA(Gln) + L-glutamate + ADP + phosphate + H(+). Functionally, allows the formation of correctly charged Gln-tRNA(Gln) through the transamidation of misacylated Glu-tRNA(Gln) in organisms which lack glutaminyl-tRNA synthetase. The reaction takes place in the presence of glutamine and ATP through an activated gamma-phospho-Glu-tRNA(Gln). The sequence is that of Glutamyl-tRNA(Gln) amidotransferase subunit A from Francisella philomiragia subsp. philomiragia (strain ATCC 25017 / CCUG 19701 / FSC 153 / O#319-036).